We begin with the raw amino-acid sequence, 101 residues long: Integration host factor subunit alpha (101 aa).

The protein belongs to the bacterial histone-like protein family. As to quaternary structure, heterodimer of an alpha and a beta chain.

Functionally, this protein is one of the two subunits of integration host factor, a specific DNA-binding protein that functions in genetic recombination as well as in transcriptional and translational control. This Halorhodospira halophila (strain DSM 244 / SL1) (Ectothiorhodospira halophila (strain DSM 244 / SL1)) protein is Integration host factor subunit alpha.